Here is a 790-residue protein sequence, read N- to C-terminus: Exocyst complex component SEC15A (790 aa).

Residues leucine 49–threonine 70 are a coiled coil.

The protein belongs to the SEC15 family. As to quaternary structure, the exocyst complex is composed of SEC3, SEC5, SEC6, SEC8, SEC10, EXO70A1 and EXO84B.

The protein resides in the cytoplasm. Its subcellular location is the cytosol. Functionally, component of the exocyst complex involved in the docking of exocytic vesicles with fusion sites on the plasma membrane during regulated or polarized secretion. Involved in polarized cell growth and organ morphogenesis. During cytokinesis, involved in cell plate initiation, cell plate maturation and formation of new primary cell wall. This Arabidopsis thaliana (Mouse-ear cress) protein is Exocyst complex component SEC15A (SEC15A).